We begin with the raw amino-acid sequence, 394 residues long: Proliferation-associated protein 2G4 (394 aa).

An N-acetylserine modification is found at S2. Residue S2 is modified to Phosphoserine. Positions 2–48 are necessary for nucleolar localization; that stretch reads SGEDEQQEQTIAEDLVVTKYKMGGDIANRVLRSLVEASSSGVSVLSL. The RNA-binding stretch occupies residues 46 to 54; that stretch reads LSLCEKGDA. Residue K298 forms a Glycyl lysine isopeptide (Lys-Gly) (interchain with G-Cter in SUMO2) linkage. The necessary for nucleolar localization stretch occupies residues 301-394; the sequence is LLQPFNVLYE…ETLEENEAGD (94 aa). The residue at position 335 (S335) is a Phosphoserine. Positions 358-394 are disordered; the sequence is LQSSASRKTQKKKKKKASKTAENATSGETLEENEAGD. Position 361 is a phosphoserine; by PKC/PRKCD (S361). The interval 361–375 is interaction with RNA; sequence SASRKTQKKKKKKAS. The span at 365–375 shows a compositional bias: basic residues; sequence KTQKKKKKKAS. T366 and T386 each carry phosphothreonine.

This sequence belongs to the peptidase M24 family. Isoform 2 interacts with the cytoplasmic domain of non-phosphorylated ERBB3; the interaction requires PKC activity. Interacts with AR. Treatment with HRG leads to dissociation from ERBB3 and increases association with AR. Interacts with NCL/nucleolin. Component of a ribonucleoprotein complex containing at least PA2G4, NCL, TOP1, PABPC2, RPLP0, acetylated histone H1 (HIST1H1A or H1F1), histone H1 2/4, RPL4, RPL8, RPL15, RPL18, RPL18A, RPL21, RPL11, RPL12, RPL28, RPL27, RPLP2 and RPL24. Interacts with HDAC2. Interacts with RB1; the interaction is enhanced upon PA2G4 dephosphorylation. Interacts with AKT1. Isoform 1 and isoform 2 interact with RNF20. Isoform 2 interacts with HUWE1. Interacts with DNAJC21. Post-translationally, phosphorylated on serine and threonine residues. Phosphorylation is enhanced by HRG treatment. Basal phosphorylation is PKC-dependent and HRG-induced phosphorylation is predominantly PKC-independent. Phosphorylation at Ser-361 by PKC/PRKCD regulates its nucleolar localization. In terms of processing, in cancer cells, isoform 2 is polyubiquitinated leading to its proteasomal degradation and phosphorylation by PKC/PRKCD enhances polyubiquitination. Isoform 2 is undetectable whereas isoform 1 is strongly expressed in cancer cells (at protein level). Isoform 1 and isoform 2 are widely expressed, including heart, brain, lung, pancreas, skeletal muscle, kidney, placenta and liver.

Its subcellular location is the cytoplasm. The protein localises to the nucleus. It is found in the nucleolus. Its function is as follows. May play a role in a ERBB3-regulated signal transduction pathway. Seems be involved in growth regulation. Acts a corepressor of the androgen receptor (AR) and is regulated by the ERBB3 ligand neuregulin-1/heregulin (HRG). Inhibits transcription of some E2F1-regulated promoters, probably by recruiting histone acetylase (HAT) activity. Binds RNA. Associates with 28S, 18S and 5.8S mature rRNAs, several rRNA precursors and probably U3 small nucleolar RNA. May be involved in regulation of intermediate and late steps of rRNA processing. May be involved in ribosome assembly. Mediates cap-independent translation of specific viral IRESs (internal ribosomal entry site). Regulates cell proliferation, differentiation, and survival. Isoform 1 suppresses apoptosis whereas isoform 2 promotes cell differentiation. In Homo sapiens (Human), this protein is Proliferation-associated protein 2G4 (PA2G4).